Here is a 455-residue protein sequence, read N- to C-terminus: tRNA modification GTPase MnmE (455 aa).

3 residues coordinate (6S)-5-formyl-5,6,7,8-tetrahydrofolate: Arg24, Glu81, and Lys120. Residues 216–378 (GMTVVIAGRP…LREHLKACMG (163 aa)) form the TrmE-type G domain. Asn226 serves as a coordination point for K(+). GTP is bound by residues 226–231 (NAGKSS), 245–251 (TDIAGTT), 270–273 (DTAG), and 335–338 (NKAD). Ser230 is a Mg(2+) binding site. Residues Thr245, Ile247, and Thr250 each contribute to the K(+) site. Thr251 serves as a coordination point for Mg(2+). Lys455 is a binding site for (6S)-5-formyl-5,6,7,8-tetrahydrofolate.

This sequence belongs to the TRAFAC class TrmE-Era-EngA-EngB-Septin-like GTPase superfamily. TrmE GTPase family. Homodimer. Heterotetramer of two MnmE and two MnmG subunits. It depends on K(+) as a cofactor.

The protein resides in the cytoplasm. Exhibits a very high intrinsic GTPase hydrolysis rate. Involved in the addition of a carboxymethylaminomethyl (cmnm) group at the wobble position (U34) of certain tRNAs, forming tRNA-cmnm(5)s(2)U34. The polypeptide is tRNA modification GTPase MnmE (Ectopseudomonas mendocina (strain ymp) (Pseudomonas mendocina)).